We begin with the raw amino-acid sequence, 267 residues long: Imidazole glycerol phosphate synthase subunit HisF (267 aa).

Catalysis depends on residues D22 and D141.

Belongs to the HisA/HisF family. Heterodimer of HisH and HisF.

Its subcellular location is the cytoplasm. The catalysed reaction is 5-[(5-phospho-1-deoxy-D-ribulos-1-ylimino)methylamino]-1-(5-phospho-beta-D-ribosyl)imidazole-4-carboxamide + L-glutamine = D-erythro-1-(imidazol-4-yl)glycerol 3-phosphate + 5-amino-1-(5-phospho-beta-D-ribosyl)imidazole-4-carboxamide + L-glutamate + H(+). It functions in the pathway amino-acid biosynthesis; L-histidine biosynthesis; L-histidine from 5-phospho-alpha-D-ribose 1-diphosphate: step 5/9. Its function is as follows. IGPS catalyzes the conversion of PRFAR and glutamine to IGP, AICAR and glutamate. The HisF subunit catalyzes the cyclization activity that produces IGP and AICAR from PRFAR using the ammonia provided by the HisH subunit. In Mycobacterium bovis (strain ATCC BAA-935 / AF2122/97), this protein is Imidazole glycerol phosphate synthase subunit HisF.